Reading from the N-terminus, the 61-residue chain is Ferredoxin-3 (61 aa).

2 4Fe-4S ferredoxin-type domains span residues Y2–G31 and K32–N61. [3Fe-4S] cluster is bound by residues C11 and C17. [4Fe-4S] cluster is bound by residues C21, C41, C44, and C47. C51 contacts [3Fe-4S] cluster.

[3Fe-4S] cluster is required as a cofactor. It depends on [4Fe-4S] cluster as a cofactor.

Ferredoxins are iron-sulfur proteins that transfer electrons in a wide variety of metabolic reactions. This Desulfocurvibacter africanus (Desulfovibrio africanus) protein is Ferredoxin-3.